Here is a 517-residue protein sequence, read N- to C-terminus: Probable protein phosphatase 2C 20 (517 aa).

Residues 1-59 are disordered; it reads MWVMQGERRRARAPWGPPDTGGALLERWISRERRSDSRDASGSAKQRSAMGNSLPVESK. A compositionally biased stretch (basic and acidic residues) spans 28-39; sequence WISRERRSDSRD. In terms of domain architecture, PPM-type phosphatase spans 70 to 373; it reads KYVVSSMQGW…DNTTVILVLF (304 aa). 4 residues coordinate Mn(2+): D105, G106, E323, and D364. The segment at 380–517 is disordered; the sequence is AVPPVDTDTD…PPHDDTYHRW (138 aa). The span at 402–414 shows a compositional bias: polar residues; sequence GSNNATASDNNDP. Over residues 438 to 455 the composition is skewed to low complexity; sequence DATATAVGSSSTTAVAAD. The segment covering 499 to 517 has biased composition (basic and acidic residues); it reads LPRSNPDKSPPHDDTYHRW.

This sequence belongs to the PP2C family. Requires Mg(2+) as cofactor. Mn(2+) serves as cofactor.

It carries out the reaction O-phospho-L-seryl-[protein] + H2O = L-seryl-[protein] + phosphate. The enzyme catalyses O-phospho-L-threonyl-[protein] + H2O = L-threonyl-[protein] + phosphate. This chain is Probable protein phosphatase 2C 20, found in Oryza sativa subsp. japonica (Rice).